The following is an 807-amino-acid chain: DNA gyrase subunit B (807 aa).

In terms of domain architecture, Toprim spans 429–543; the sequence is SELFIVEGDS…KGYLYIAQPP (115 aa). 3 residues coordinate Mg(2+): Glu-435, Asp-508, and Asp-510.

This sequence belongs to the type II topoisomerase GyrB family. In terms of assembly, heterotetramer, composed of two GyrA and two GyrB chains. In the heterotetramer, GyrA contains the active site tyrosine that forms a transient covalent intermediate with DNA, while GyrB binds cofactors and catalyzes ATP hydrolysis. Mg(2+) is required as a cofactor. The cofactor is Mn(2+). Ca(2+) serves as cofactor.

It localises to the cytoplasm. It carries out the reaction ATP-dependent breakage, passage and rejoining of double-stranded DNA.. Its function is as follows. A type II topoisomerase that negatively supercoils closed circular double-stranded (ds) DNA in an ATP-dependent manner to modulate DNA topology and maintain chromosomes in an underwound state. Negative supercoiling favors strand separation, and DNA replication, transcription, recombination and repair, all of which involve strand separation. Also able to catalyze the interconversion of other topological isomers of dsDNA rings, including catenanes and knotted rings. Type II topoisomerases break and join 2 DNA strands simultaneously in an ATP-dependent manner. In Rickettsia prowazekii (strain Madrid E), this protein is DNA gyrase subunit B.